Here is a 338-residue protein sequence, read N- to C-terminus: Malate dehydrogenase, mitochondrial (338 aa).

The transit peptide at 1–24 directs the protein to the mitochondrion; the sequence is MLSALARPAGAALRRSFSTSAQNN. NAD(+) is bound by residues 31 to 37 and Asp-57; that span reads GASGGIG. Residue Ser-33 is glycosylated (O-linked (GalNAc...) serine). Lys-78 and Lys-91 each carry N6-acetyllysine; alternate. An N6-succinyllysine; alternate mark is found at Lys-78 and Lys-91. Substrate is bound by residues Arg-104 and Arg-110. Residues Asn-117 and 140–142 each bind NAD(+); that span reads ISN. Asn-142 provides a ligand contact to substrate. Residue Lys-165 is modified to N6-acetyllysine. Catalysis depends on Asp-173, which acts as the Proton relay. Residue Arg-176 participates in substrate binding. Residue Lys-185 is modified to N6-acetyllysine; alternate. Residue Lys-185 is modified to N6-succinyllysine; alternate. The active-site Proton acceptor is the His-200. Lys-203 carries the N6-succinyllysine modification. N6-acetyllysine; alternate is present on residues Lys-215 and Lys-239. An N6-succinyllysine; alternate mark is found at Lys-215 and Lys-239. Residue Lys-239 is modified to N6-malonyllysine; alternate. Ser-246 bears the Phosphoserine mark. Met-251 contributes to the NAD(+) binding site. Lys-269 carries the post-translational modification N6-succinyllysine. Residues Lys-296, Lys-301, Lys-307, Lys-314, and Lys-324 each carry the N6-acetyllysine; alternate modification. An N6-succinyllysine; alternate mark is found at Lys-296, Lys-301, Lys-307, Lys-314, and Lys-324. Residue Lys-307 is modified to N6-malonyllysine; alternate. Ser-326 carries the phosphoserine modification. N6-acetyllysine; alternate occurs at positions 328, 329, and 335. Position 328 is an N6-succinyllysine; alternate (Lys-328). Lys-329 carries the N6-malonyllysine; alternate modification. Residue Lys-335 is modified to N6-succinyllysine; alternate.

The protein belongs to the LDH/MDH superfamily. MDH type 1 family. As to quaternary structure, homodimer. Post-translationally, acetylation is enhanced after treatment either with trichostin A (TSA) or with nicotinamide (NAM) with the appearance of tri- and tetraacetylations. Glucose also increases acetylation. As to expression, ubiquitously expressed. Highly expressed in skeletal muscle and heart. Also expressed in liver, ileum, colon, kidney and adipose tissue, and at very low levels in lung, pancreas, stomach and spleen.

The protein resides in the mitochondrion matrix. The enzyme catalyses (S)-malate + NAD(+) = oxaloacetate + NADH + H(+). Its activity is regulated as follows. Enzyme activity is enhanced by acetylation. The protein is Malate dehydrogenase, mitochondrial of Felis catus (Cat).